Reading from the N-terminus, the 248-residue chain is tRNA (guanine-N(1)-)-methyltransferase (248 aa).

S-adenosyl-L-methionine contacts are provided by residues G113 and 133–138 (IGDYVL). Residues 227–248 (RPAQTIRAKGESQKTPKNKTDG) form a disordered region. Positions 234–248 (AKGESQKTPKNKTDG) are enriched in basic and acidic residues.

It belongs to the RNA methyltransferase TrmD family. In terms of assembly, homodimer.

The protein resides in the cytoplasm. The catalysed reaction is guanosine(37) in tRNA + S-adenosyl-L-methionine = N(1)-methylguanosine(37) in tRNA + S-adenosyl-L-homocysteine + H(+). Specifically methylates guanosine-37 in various tRNAs. This is tRNA (guanine-N(1)-)-methyltransferase from Rhodopseudomonas palustris (strain TIE-1).